We begin with the raw amino-acid sequence, 349 residues long: Phenylalanine--tRNA ligase alpha subunit (349 aa).

Glu-258 contacts Mg(2+).

It belongs to the class-II aminoacyl-tRNA synthetase family. Phe-tRNA synthetase alpha subunit type 1 subfamily. Tetramer of two alpha and two beta subunits. Mg(2+) serves as cofactor.

Its subcellular location is the cytoplasm. The catalysed reaction is tRNA(Phe) + L-phenylalanine + ATP = L-phenylalanyl-tRNA(Phe) + AMP + diphosphate + H(+). The polypeptide is Phenylalanine--tRNA ligase alpha subunit (Rickettsia canadensis (strain McKiel)).